The sequence spans 740 residues: 1,4-alpha-glucan branching enzyme GlgB (740 aa).

The active-site Nucleophile is the Asp-409. The active-site Proton donor is the Glu-462.

Belongs to the glycosyl hydrolase 13 family. GlgB subfamily. As to quaternary structure, monomer.

The enzyme catalyses Transfers a segment of a (1-&gt;4)-alpha-D-glucan chain to a primary hydroxy group in a similar glucan chain.. Its pathway is glycan biosynthesis; glycogen biosynthesis. Its function is as follows. Catalyzes the formation of the alpha-1,6-glucosidic linkages in glycogen by scission of a 1,4-alpha-linked oligosaccharide from growing alpha-1,4-glucan chains and the subsequent attachment of the oligosaccharide to the alpha-1,6 position. This Methylococcus capsulatus (strain ATCC 33009 / NCIMB 11132 / Bath) protein is 1,4-alpha-glucan branching enzyme GlgB.